An 86-amino-acid chain; its full sequence is MKKIGVESGLSAIADYLKNEGYSVELLGGNLENNAAKCDSFDAVVTADYNTNMMGFCNTSTKTPIVNASGLTREEVKNMIEQKTSR.

This sequence belongs to the UPF0180 family.

The sequence is that of UPF0180 protein CA_C1486 from Clostridium acetobutylicum (strain ATCC 824 / DSM 792 / JCM 1419 / IAM 19013 / LMG 5710 / NBRC 13948 / NRRL B-527 / VKM B-1787 / 2291 / W).